Here is a 287-residue protein sequence, read N- to C-terminus: Neuferricin homolog (287 aa).

The signal sequence occupies residues 1 to 22; the sequence is MFGLLRHLFKFQFLFVVAAVLG. Residues 61 to 146 enclose the Cytochrome b5 heme-binding domain; that stretch reads GTLFTPAELA…KPDDLIGLAG (86 aa). A coiled-coil region spans residues 175–204; that stretch reads YHHKFLELLEQARDAKRQVEELRARYPGCN.

It belongs to the cytochrome b5 family. MAPR subfamily.

It is found in the secreted. In terms of biological role, heme-binding protein. The protein is Neuferricin homolog of Drosophila melanogaster (Fruit fly).